The primary structure comprises 178 residues: Inner membrane-spanning protein YciB (178 aa).

5 helical membrane passes run 22-42 (IFVA…VSWL), 50-70 (MALF…ALHN), 76-96 (WKVT…HWFM), 121-141 (IAWA…AFWL), and 149-169 (FKVF…GIYI).

Belongs to the YciB family.

The protein resides in the cell inner membrane. Its function is as follows. Plays a role in cell envelope biogenesis, maintenance of cell envelope integrity and membrane homeostasis. In Erwinia tasmaniensis (strain DSM 17950 / CFBP 7177 / CIP 109463 / NCPPB 4357 / Et1/99), this protein is Inner membrane-spanning protein YciB.